Reading from the N-terminus, the 150-residue chain is Large ribosomal subunit protein bL9 (150 aa).

Belongs to the bacterial ribosomal protein bL9 family.

In terms of biological role, binds to the 23S rRNA. The sequence is that of Large ribosomal subunit protein bL9 from Paraburkholderia xenovorans (strain LB400).